We begin with the raw amino-acid sequence, 314 residues long: Ketimine reductase mu-crystallin (314 aa).

Residue R47 coordinates 3,3',5-triiodo-L-thyronine. NADPH contacts are provided by S91, H92, R119, A144, V146, Q147, N168, R169, T170, N173, T205, and M206. E257 is a 3,3',5-triiodo-L-thyronine binding site. Position 292 (S292) interacts with NADPH.

Belongs to the ornithine cyclodeaminase/mu-crystallin family. Homodimer. Binds the thyroid hormone triiodothyronine (T3); T3 binding inhibits enzymatic activity.

It is found in the cytoplasm. It catalyses the reaction L-pipecolate + NAD(+) = Delta(1)-piperideine-2-carboxylate + NADH + H(+). The catalysed reaction is L-pipecolate + NADP(+) = Delta(1)-piperideine-2-carboxylate + NADPH + H(+). It carries out the reaction L-proline + NADP(+) = 1-pyrroline-2-carboxylate + NADPH + H(+). The enzyme catalyses L-proline + NAD(+) = 1-pyrroline-2-carboxylate + NADH + H(+). It catalyses the reaction (3R)-1,4-thiomorpholine-3-carboxylate + NAD(+) = 3,4-dehydrothiomorpholine-3-carboxylate + NADH + 2 H(+). The catalysed reaction is (3R)-1,4-thiomorpholine-3-carboxylate + NADP(+) = 3,4-dehydrothiomorpholine-3-carboxylate + NADPH + 2 H(+). It carries out the reaction (S)-cystathionine ketimine + NADH + 2 H(+) = (3R,5S)-2,3,5,6,7-pentahydro-1,4-thiazepine-3,5-dicarboxylate + NAD(+). The enzyme catalyses (S)-cystathionine ketimine + NADPH + 2 H(+) = (3R,5S)-2,3,5,6,7-pentahydro-1,4-thiazepine-3,5-dicarboxylate + NADP(+). It catalyses the reaction (R)-lanthionine ketimine + NADPH + 2 H(+) = (3R,5R)-1,4-thiomorpholine-3,5-dicarboxylate + NADP(+). The catalysed reaction is Delta(2)-thiazoline-2-carboxylate + NADPH + 2 H(+) = L-thiazolidine-2-carboxylate + NADP(+). Catalyzes the NAD(P)H-dependent reduction of imine double bonds of a number of cyclic ketimine substrates, including sulfur-containing cyclic ketimines. Under physiological conditions, it efficiently catalyzes delta(1)-piperideine-2-carboxylate (P2C) and delta(1)-pyrroline-2-carboxylate (Pyr2C) reduction, suggesting a central role in lysine and glutamate metabolism. Additional substrates are (S)-cystathionine ketimine (CysK), 3,4-dehydrothiomorpholine-3-carboxylate (AECK), and (R)-lanthionine ketimine (LK) that is reduced at very low rate compared to other substrates. Also catalyzes the NAD(P)H-dependent reduction of delta(2)-thiazoline-2-carboxylate (T2C). This chain is Ketimine reductase mu-crystallin (CRYM), found in Bos taurus (Bovine).